A 116-amino-acid polypeptide reads, in one-letter code: MTNKIIQQIEAEQMNKEIPAFAPGDTVIVQVKVKEGDRQRLQAFEGVVIAKRNRGLNSAFTVRKISNGVGVERTFQTYSPIVDSLSVKRRGDVRKAKLYYLRALSGKAARIKEKLV.

It belongs to the bacterial ribosomal protein bL19 family.

In terms of biological role, this protein is located at the 30S-50S ribosomal subunit interface and may play a role in the structure and function of the aminoacyl-tRNA binding site. This is Large ribosomal subunit protein bL19 from Pseudomonas aeruginosa (strain LESB58).